The sequence spans 565 residues: Polyadenylate-binding protein 1-A (565 aa).

4 RRM domains span residues 10–88, 98–175, 188–265, and 284–362; these read SSLY…WSQR, GNVF…PFKS, TNVF…RAQK, and VNLY…LAQR. Residues 435–466 form a disordered region; that stretch reads YARGQPRQNGPRQNGGQPRQNGPRPDVSGAQP. Positions 440-454 are enriched in polar residues; sequence PRQNGPRQNGGQPRQ. The PABC domain maps to 489 to 565; it reads SALNLQSIIN…REALEVLGSN (77 aa).

Belongs to the polyadenylate-binding protein type-1 family.

The protein resides in the cytoplasm. It localises to the nucleus. Functionally, binds the poly(A) tail of mRNA. Appears to be an important mediator of the multiple roles of the poly(A) tail in mRNA biogenesis, stability and translation. The protein is Polyadenylate-binding protein 1-A (pabpc1A) of Dictyostelium discoideum (Social amoeba).